The following is a 709-amino-acid chain: Fatty acid oxidation complex subunit alpha (709 aa).

Positions M1–P188 are enoyl-CoA hydratase. A 3-hydroxyacyl-CoA dehydrogenase region spans residues R308–F709.

The protein in the N-terminal section; belongs to the enoyl-CoA hydratase/isomerase family. This sequence in the central section; belongs to the 3-hydroxyacyl-CoA dehydrogenase family. As to quaternary structure, heterotetramer of two alpha chains (FadJ) and two beta chains (FadI).

Its subcellular location is the cytoplasm. The enzyme catalyses a (3S)-3-hydroxyacyl-CoA = a (2E)-enoyl-CoA + H2O. It carries out the reaction a 4-saturated-(3S)-3-hydroxyacyl-CoA = a (3E)-enoyl-CoA + H2O. The catalysed reaction is a (3S)-3-hydroxyacyl-CoA + NAD(+) = a 3-oxoacyl-CoA + NADH + H(+). It catalyses the reaction (3S)-3-hydroxybutanoyl-CoA = (3R)-3-hydroxybutanoyl-CoA. Its pathway is lipid metabolism; fatty acid beta-oxidation. Its function is as follows. Catalyzes the formation of a hydroxyacyl-CoA by addition of water on enoyl-CoA. Also exhibits 3-hydroxyacyl-CoA epimerase and 3-hydroxyacyl-CoA dehydrogenase activities. This Shewanella sp. (strain MR-7) protein is Fatty acid oxidation complex subunit alpha.